The following is a 260-amino-acid chain: Peptidase inhibitor 15-A (260 aa).

Residues 1–21 (MNENRLAIDILLLCISCGASA) form the signal peptide. Residues 22–62 (LAGFSPTASSSLPATNLTDIGFAPPKYLTEAANIPKTRRKR) constitute a propeptide that is removed on maturation. N-linked (GlcNAc...) asparagine glycans are attached at residues Asn37 and Asn126. An SCP domain is found at 73–213 (LDYHNKVRGK…KRATYLVCNY (141 aa)).

Belongs to the CRISP family.

Its subcellular location is the secreted. Its function is as follows. Serine protease inhibitor which displays weak inhibitory activity against trypsin. May play a role in facial patterning during embryonic development. The polypeptide is Peptidase inhibitor 15-A (pi15a) (Danio rerio (Zebrafish)).